Here is a 183-residue protein sequence, read N- to C-terminus: Ras-related protein Rap-2a (183 aa).

GTP is bound at residue 10 to 17 (GSGGVGKS). Positions 32 to 40 (YDPTIEDFY) match the Effector region motif. A glycan ((Microbial infection) O-linked (Glc) threonine; by C.difficile toxin TcdA, and by P.sordellii toxin TcsL) is linked at Thr35. GTP contacts are provided by residues 57 to 61 (DTAGT) and 116 to 119 (NKVD). S-palmitoyl cysteine attachment occurs at residues Cys176 and Cys177. A Cysteine methyl ester modification is found at Cys180. Cys180 is lipidated: S-farnesyl cysteine. The propeptide at 181 to 183 (NIQ) is removed in mature form.

It belongs to the small GTPase superfamily. Ras family. Interacts (GTP-bound form) with RUNDC3A. Interacts with RGS14; the interaction is GTP-dependent. Interacts with PLCE1. Interacts with ARHGAP29, SGSM1, SGSM2 and SGSM3. Interacts (GTP-bound form preferentially) with TNIK (via the CNH domain); the interaction is direct and recruits RAP2A to the E3 ubiquitin ligase NEDD4. Interacts with MINK1. Interacts (GTP-bound form preferentially) with MAP4K4. Interacts with cytoskeletal actin. Post-translationally, ubiquitinated; undergoes 'Lys-63' monoubiquitination and diubiquitination by NEDD4. Multiple lysine residues are probably modified. Ubiquitination requires TNIK, prevents interaction with effectors and inactivates RAP2A. Ubiquitination by the ECS(RAB40B) complex leads to RAP2A localization to lamellipodia plasma membrane, activation, and regulation of sorting at early endosomes for recycling to the lamellipodia plasma membrane. Palmitoylated. Palmitoylation is required for association with recycling endosome membranes and activation of TNIK. In terms of processing, (Microbial infection) Glucosylated at Thr-35 by C.difficile toxin TcdA in the colonic epithelium, and by P.sordellii toxin TcsL in the vascular endothelium.

The protein resides in the midbody. Its subcellular location is the cell projection. The protein localises to the lamellipodium membrane. It is found in the golgi apparatus. It localises to the recycling endosome membrane. The protein resides in the lysosome. The enzyme catalyses GTP + H2O = GDP + phosphate + H(+). Activated by the guanine nucleotide-exchange factors RAPGEF3 and RAPGEF4 in a cAMP-dependent manner. Nucleotide exchange is also specifically stimulated by RAPGEF5, RASGEF1A and RASGEF1B. Small GTP-binding protein which cycles between a GDP-bound inactive and a GTP-bound active form. In its active form interacts with and regulates several effectors including MAP4K4, MINK1 and TNIK. Part of a signaling complex composed of NEDD4, RAP2A and TNIK which regulates neuronal dendrite extension and arborization during development. More generally, it is part of several signaling cascades and regulates cytoskeletal rearrangements, cell migration, cell adhesion and cell spreading. The protein is Ras-related protein Rap-2a of Homo sapiens (Human).